An 881-amino-acid chain; its full sequence is EEF1AKMT4-ECE2 readthrough transcript protein (881 aa).

A methyltransferase-like region region spans residues 1-160; it reads MASPRTPVSP…VHTVDQVLSE (160 aa). Topologically, residues 1 to 178 are cytoplasmic; sequence MASPRTPVSP…QLFGSHTQLE (178 aa). S-adenosyl-L-methionine-binding residues include Trp26 and Tyr30. Tyr39 is subject to Phosphotyrosine. Residues Trp41, Gly66, 88–89, 113–114, and Lys130 contribute to the S-adenosyl-L-methionine site; these read DY and DV. A Phosphoserine modification is found at His174. Residues 179 to 199 traverse the membrane as a helical; Signal-anchor for type II membrane protein segment; that stretch reads LVLAGLILVLAALLLGCLVAL. The Lumenal portion of the chain corresponds to 200–881; that stretch reads WVHRDPAHST…MNPGQLCEVW (682 aa). A Peptidase M13 domain is found at 209 to 881; the sequence is TCVTEACIRV…MNPGQLCEVW (673 aa). 5 cysteine pairs are disulfide-bonded: Cys210–Cys215, Cys233–Cys866, Cys241–Cys826, Cys297–Cys546, and Cys755–Cys878. N-linked (GlcNAc...) asparagine glycans are attached at residues Asn277, Asn281, Asn322, Asn382, Asn427, Asn494, and Asn650. Residue His718 coordinates Zn(2+). Residue Glu719 is part of the active site. His722 provides a ligand contact to Zn(2+). Residues Asn743 and Asn751 are each glycosylated (N-linked (GlcNAc...) asparagine). Position 778 (Glu778) interacts with Zn(2+). Asp782 serves as the catalytic Proton donor.

The protein in the N-terminal section; belongs to the methyltransferase superfamily. This sequence in the C-terminal section; belongs to the peptidase M13 family. Zn(2+) is required as a cofactor. Expressed at high levels in central nervous system. Expressed in adrenal glands, ovary and uterus, and at low levels in heart.

The protein resides in the golgi apparatus membrane. It is found in the cytoplasmic vesicle. Its subcellular location is the secretory vesicle membrane. It carries out the reaction Hydrolysis of the 21-Trp-|-Val-22 bond in big endothelin to form endothelin 1.. Inhibited by phosphoramidon. In terms of biological role, converts big endothelin-1 to endothelin-1. May also have methyltransferase activity. May play a role in amyloid-beta processing. The polypeptide is EEF1AKMT4-ECE2 readthrough transcript protein (Mus musculus (Mouse)).